We begin with the raw amino-acid sequence, 209 residues long: Uracil phosphoribosyltransferase (209 aa).

5-phospho-alpha-D-ribose 1-diphosphate contacts are provided by residues Arg-79, Arg-104, and 131-139 (DPMLATGGS). Residues Ile-194 and 199-201 (GDA) each bind uracil. Asp-200 is a binding site for 5-phospho-alpha-D-ribose 1-diphosphate.

It belongs to the UPRTase family. It depends on Mg(2+) as a cofactor.

It carries out the reaction UMP + diphosphate = 5-phospho-alpha-D-ribose 1-diphosphate + uracil. It participates in pyrimidine metabolism; UMP biosynthesis via salvage pathway; UMP from uracil: step 1/1. With respect to regulation, allosterically activated by GTP. Its function is as follows. Catalyzes the conversion of uracil and 5-phospho-alpha-D-ribose 1-diphosphate (PRPP) to UMP and diphosphate. The sequence is that of Uracil phosphoribosyltransferase from Streptococcus pyogenes serotype M49 (strain NZ131).